Consider the following 95-residue polypeptide: Large ribosomal subunit protein bL27 (95 aa).

Positions 1-24 are disordered; that stretch reads MAHKKGTGSTRNGRDSNSQRLGVK. The span at 7-20 shows a compositional bias: polar residues; sequence TGSTRNGRDSNSQR.

It belongs to the bacterial ribosomal protein bL27 family.

The chain is Large ribosomal subunit protein bL27 from Trichodesmium erythraeum (strain IMS101).